The following is a 378-amino-acid chain: MTYRPATDPPDLDTLTLGVEEEFLLLDSDTGESMPVAARVLDGLSGTAYEQSRREFRHSMVEMVTPVVSDLAELRRHLVALRTAAAEAAESAGAHLVAVGATPVNETHRTVPDEPRYHAMSRRFGPVAHDPAVCGCHVHVGLPDRELAVQVCNHLRPWLPVVQAITANSPLHDGQDTGHASWRAMQLERWPSIGPTPYFDSAADYDATVADLIKAGIMLDAGMVYWYVRPSAAFPTVEIRVGDVCPTVDDTVLVAALVRALVATLAADVRDGARATRIRGCLVSAAHWRAAHDGLDGDLVDLRTGHARPAWDLVDELFALVAPALERQGDRAYVLDQLARLRDEGTGAARQRRILERTGCDVRAVLAHLAAQTRPVPA.

Belongs to the glutamate--cysteine ligase type 2 family. YbdK subfamily.

It carries out the reaction L-cysteine + L-glutamate + ATP = gamma-L-glutamyl-L-cysteine + ADP + phosphate + H(+). In terms of biological role, ATP-dependent carboxylate-amine ligase which exhibits weak glutamate--cysteine ligase activity. The polypeptide is Putative glutamate--cysteine ligase 2 (Salinispora tropica (strain ATCC BAA-916 / DSM 44818 / JCM 13857 / NBRC 105044 / CNB-440)).